The following is a 224-amino-acid chain: Inhibitor of apoptosis protein (224 aa).

One copy of the BIR repeat lies at 29–92; sequence VDARNKSFAI…GFWSRNCGFM (64 aa). Positions 62, 65, 82, and 89 each coordinate Zn(2+). Residues 189-207 form a C4-type zinc finger; the sequence is CMTCGIEQINKDENFCSAC.

It belongs to the asfivirus IAP family. As to quaternary structure, interacts with subunit p17 of host CASP3.

It is found in the host cytoplasm. The protein resides in the virion. Its function is as follows. Prevents apoptosis of host cell by inhibiting caspase-3/CASP3 activation to promote the viral replication. Also induces the activation of host NF-kappaB. The sequence is that of Inhibitor of apoptosis protein from Ornithodoros (relapsing fever ticks).